A 236-amino-acid polypeptide reads, in one-letter code: MKYKLLPCLLAILLTGCDRTEVTLSFTPEMASFSNEFDFDPLRGPVKDFTQTLMDEQGEVTKRVSGTLSEEGCFDSLELLDLENNTLVALVLDANYYRDAETLEKRVRLQGKCQLAELPSAGVSWETDDNGFVIKASSKQMQMEYRYDDQGYPLGKTTTSNDKTLSVSATPSTDPIKKLDYTAVTLLNNQRVGNVKQSCEYDNHANPVDCQLIIVDEGVKPAVERVYTIKNTIDYY.

Residues 1-16 (MKYKLLPCLLAILLTG) form the signal peptide. C17 carries the N-palmitoyl cysteine lipid modification. C17 carries S-diacylglycerol cysteine lipidation.

It belongs to the UPF0257 family.

It localises to the cell membrane. The sequence is that of UPF0257 lipoprotein YnfC from Escherichia coli O127:H6 (strain E2348/69 / EPEC).